We begin with the raw amino-acid sequence, 513 residues long: ATP synthase subunit alpha (513 aa).

Residue 169–176 (GDRQIGKT) coordinates ATP.

It belongs to the ATPase alpha/beta chains family. In terms of assembly, F-type ATPases have 2 components, CF(1) - the catalytic core - and CF(0) - the membrane proton channel. CF(1) has five subunits: alpha(3), beta(3), gamma(1), delta(1), epsilon(1). CF(0) has three main subunits: a(1), b(2) and c(9-12). The alpha and beta chains form an alternating ring which encloses part of the gamma chain. CF(1) is attached to CF(0) by a central stalk formed by the gamma and epsilon chains, while a peripheral stalk is formed by the delta and b chains.

It localises to the cell inner membrane. It carries out the reaction ATP + H2O + 4 H(+)(in) = ADP + phosphate + 5 H(+)(out). Functionally, produces ATP from ADP in the presence of a proton gradient across the membrane. The alpha chain is a regulatory subunit. This is ATP synthase subunit alpha from Francisella tularensis subsp. novicida (strain U112).